A 352-amino-acid chain; its full sequence is Histidinol-phosphate aminotransferase (352 aa).

K221 bears the N6-(pyridoxal phosphate)lysine mark.

The protein belongs to the class-II pyridoxal-phosphate-dependent aminotransferase family. Histidinol-phosphate aminotransferase subfamily. Homodimer. Requires pyridoxal 5'-phosphate as cofactor.

It carries out the reaction L-histidinol phosphate + 2-oxoglutarate = 3-(imidazol-4-yl)-2-oxopropyl phosphate + L-glutamate. Its pathway is amino-acid biosynthesis; L-histidine biosynthesis; L-histidine from 5-phospho-alpha-D-ribose 1-diphosphate: step 7/9. This chain is Histidinol-phosphate aminotransferase, found in Staphylococcus aureus (strain bovine RF122 / ET3-1).